Here is a 217-residue protein sequence, read N- to C-terminus: Ribonuclease HII (217 aa).

The region spanning 17-207 (KVIYGVDEAG…CVGQSVSGAR (191 aa)) is the RNase H type-2 domain. A divalent metal cation contacts are provided by Asp23, Glu24, and Asp116.

The protein belongs to the RNase HII family. The cofactor is Mn(2+). Mg(2+) serves as cofactor.

The protein localises to the cytoplasm. It carries out the reaction Endonucleolytic cleavage to 5'-phosphomonoester.. Its function is as follows. Endonuclease that specifically degrades the RNA of RNA-DNA hybrids. The chain is Ribonuclease HII from Nitrosomonas europaea (strain ATCC 19718 / CIP 103999 / KCTC 2705 / NBRC 14298).